The sequence spans 159 residues: 2-C-methyl-D-erythritol 2,4-cyclodiphosphate synthase (159 aa).

Asp8 and His10 together coordinate a divalent metal cation. 4-CDP-2-C-methyl-D-erythritol 2-phosphate-binding positions include 8-10 and 34-35; these read DVH and HS. His42 contributes to the a divalent metal cation binding site. 4-CDP-2-C-methyl-D-erythritol 2-phosphate is bound by residues 56 to 58, 61 to 65, 100 to 106, 132 to 135, Phe139, and Arg142; these read DIG, FPDTD, AQAPKMA, and TTTE.

This sequence belongs to the IspF family. Homotrimer. It depends on a divalent metal cation as a cofactor.

It catalyses the reaction 4-CDP-2-C-methyl-D-erythritol 2-phosphate = 2-C-methyl-D-erythritol 2,4-cyclic diphosphate + CMP. It participates in isoprenoid biosynthesis; isopentenyl diphosphate biosynthesis via DXP pathway; isopentenyl diphosphate from 1-deoxy-D-xylulose 5-phosphate: step 4/6. Involved in the biosynthesis of isopentenyl diphosphate (IPP) and dimethylallyl diphosphate (DMAPP), two major building blocks of isoprenoid compounds. Catalyzes the conversion of 4-diphosphocytidyl-2-C-methyl-D-erythritol 2-phosphate (CDP-ME2P) to 2-C-methyl-D-erythritol 2,4-cyclodiphosphate (ME-CPP) with a corresponding release of cytidine 5-monophosphate (CMP). The protein is 2-C-methyl-D-erythritol 2,4-cyclodiphosphate synthase of Cronobacter sakazakii (strain ATCC BAA-894) (Enterobacter sakazakii).